Reading from the N-terminus, the 946-residue chain is Atos homolog protein A (946 aa).

The transactivation domain 1 (TAD1) stretch occupies residues 24–32; the sequence is ALLITEGRT. Basic and acidic residues predominate over residues 34 to 43; it reads EHSVKGRTEG. Disordered regions lie at residues 34-58, 246-271, 484-524, and 547-567; these read EHSVKGRTEGPHCPPAQLSQPAPNK, SVTQPHNSQDNDQNSAPVSQHAFTKP, FQSS…TGNQ, and SCTDSFHKPQKDNPKICSQKV. Polar residues-rich tracts occupy residues 247-267 and 484-500; these read VTQPHNSQDNDQNSAPVSQHA and FQSSGQSTVPSSNNENI. Composition is skewed to basic and acidic residues over residues 503–517 and 547–560; these read LPEKRDIKQSEHGEI and SCTDSFHKPQKDNP. The segment at 749-806 is required for macropage invasion; sequence LLGNFEESVLNYRFEPLGVVEGFTAEVGASGIFCPTHMTLPVKVSFYSVSDDNAPSPY. A transactivation domain 2 (TAD2) region spans residues 833 to 841; sequence FNPNKTVVK.

The protein belongs to the ATOS family.

The protein localises to the nucleus. Transcription regulator that syncronizes transcriptional and translational programs to promote macrophage invasion of tissues. In Xenopus tropicalis (Western clawed frog), this protein is Atos homolog protein A (atosa).